The primary structure comprises 578 residues: Glycosyltransferase family 92 protein RCOM_0530710 (578 aa).

The helical transmembrane segment at 21–43 (SFFSVRSLTACLSFFVFLLFISS) threads the bilayer. Positions 295–531 (YELCACTMLW…QNQGSKDRAP (237 aa)) constitute a GT92 domain.

The protein belongs to the glycosyltransferase 92 family.

It localises to the membrane. This chain is Glycosyltransferase family 92 protein RCOM_0530710, found in Ricinus communis (Castor bean).